The following is a 91-amino-acid chain: Probable Fe(2+)-trafficking protein (91 aa).

This sequence belongs to the Fe(2+)-trafficking protein family. In terms of assembly, monomer.

Could be a mediator in iron transactions between iron acquisition and iron-requiring processes, such as synthesis and/or repair of Fe-S clusters in biosynthetic enzymes. The polypeptide is Probable Fe(2+)-trafficking protein (Salmonella agona (strain SL483)).